Here is a 162-residue protein sequence, read N- to C-terminus: Allophycocyanin alpha-B chain (162 aa).

An N4-methylasparagine modification is found at Asn-71. Cys-81 contributes to the (2R,3E)-phycocyanobilin binding site.

The protein belongs to the phycobiliprotein family. Contains one covalently linked phycocyanobilin chromophore.

It is found in the plastid. The protein resides in the cyanelle thylakoid membrane. In terms of biological role, allophycocyanin is a photosynthetic bile pigment-protein complex with maximum absorption at approximately 650 nanometers. The sequence is that of Allophycocyanin alpha-B chain (apcD) from Cyanophora paradoxa.